Reading from the N-terminus, the 118-residue chain is MKLKTLPPTLRDKNRYIAFEIISDDEFTKDEVKSLIWEASLRVLGELGTALAKPWFIKYDPKTKTGIVRCDREYVEHLRFALMLATDFNGKRLIIRTLGVSGTIKRLKKKFLSQYGWK.

This sequence belongs to the eukaryotic/archaeal RNase P protein component 2 family. In terms of assembly, consists of a catalytic RNA component and at least 4-5 protein subunits.

It is found in the cytoplasm. The enzyme catalyses Endonucleolytic cleavage of RNA, removing 5'-extranucleotides from tRNA precursor.. Part of ribonuclease P, a protein complex that generates mature tRNA molecules by cleaving their 5'-ends. This is Ribonuclease P protein component 2 from Pyrococcus abyssi (strain GE5 / Orsay).